The following is a 469-amino-acid chain: MDVENEQILNVNPADPDNLSDSLFSGDEENAGTEEIKNEINGNWISASSINEARINAKAKRRLRKNSSRDSGRGDSVSDSGSDALRSGLTVPTSPKGRLLDRRSRSGKGRGLPKKGGAGGKGVWGTPGQVYDVEEVDVKDPNYDDDQENCVYETVVLPLDERAFEKTLTPIIQEYFEHGDTNEVAEMLRDLNLGEMKSGVPVLAVSLALEGKASHREMTSKLLSDLCGTVMSTTDVEKSFDKLLKDLPELALDTPRAPQLVGQFIARAVGDGILCNTYIDSYKGTVDCVQARAALDKATVLLSMSKGGKRKDSVWGSGGGQQSVNHLVKEIDMLLKEYLLSGDISEAEHCLKELEVPHFHHELVYEAIIMVLESTGESTFKMILDLLKSLWKSSTITVDQMKRGYERIYNEIPDINLDVPHSYSVLERFVEECFQAGIISKQLRDLCPSRGRKRFVSEGDGGRLKPESY.

At Met1 the chain carries N-acetylmethionine. Disordered regions lie at residues 1–38 (MDVE…EIKN) and 58–128 (KAKR…GTPG). At Ser25 the chain carries Phosphoserine. The Nuclear localization signal motif lies at 58 to 64 (KAKRRLR). Ser67 carries the post-translational modification Phosphoserine; by PKB and RPS6KB1. 6 positions are modified to phosphoserine: Ser68, Ser71, Ser76, Ser78, Ser80, and Ser94. The short motif at 70-76 (DSGRGDS) is the Phosphodegron element. Residues 74-83 (GDSVSDSGSD) show a composition bias toward low complexity. A compositionally biased stretch (gly residues) spans 114 to 125 (KKGGAGGKGVWG). Phosphotyrosine is present on Tyr152. The region spanning 163-284 (AFEKTLTPII…CNTYIDSYKG (122 aa)) is the MI 1 domain. The short motif at 241 to 250 (DKLLKDLPEL) is the Nuclear localization signal element. A phosphoserine mark is found at Ser313 and Ser317. In terms of domain architecture, MI 2 spans 326–449 (HLVKEIDMLL…SKQLRDLCPS (124 aa)). Ser457 is subject to Phosphoserine; by PKB.

Belongs to the PDCD4 family. Interacts (via MI domains) with EIF4A2. Interacts (via MI domains) with EIF4A1 (via N-terminal domain). Heterotrimer with EIF4A1; one molecule of PDCD4 binds two molecules of EIF4A1. Interacts with EIF4G1. May form a complex with EIF4A1 and EIF4G1. The interaction between PDCD4 and EIF4A1 interferes with the interaction between EIF4A1 and EIF4G. When phosphorylated, interacts with BTRC and FBXW11. In terms of processing, polyubiquitinated, leading to its proteasomal degradation. Rapidly degraded in response to mitogens. Phosphorylation of the phosphodegron promotes interaction with BTRC and proteasomal degradation. Phosphorylated at Ser-67 by RPS6KB1 in response to mitogens; phosphorylation promotes proteasomal degradation of PDCD4. Up-regulated in proliferative cells. Highly expressed in epithelial cells of the mammary gland. Reduced expression in lung cancer and colon carcinoma.

Its subcellular location is the nucleus. The protein resides in the cytoplasm. In terms of biological role, inhibits translation initiation and cap-dependent translation. May excert its function by hindering the interaction between EIF4A1 and EIF4G. Inhibits the helicase activity of EIF4A. Modulates the activation of JUN kinase. Down-regulates the expression of MAP4K1, thus inhibiting events important in driving invasion, namely, MAPK85 activation and consequent JUN-dependent transcription. May play a role in apoptosis. Tumor suppressor. Inhibits tumor promoter-induced neoplastic transformation. Binds RNA. This Homo sapiens (Human) protein is Programmed cell death protein 4 (PDCD4).